A 266-amino-acid polypeptide reads, in one-letter code: Cyclin-C (266 aa).

The 105-residue stretch at 47 to 151 (IIQVLGEQLK…LLENLDCCLI (105 aa)) folds into the Cyclin N-terminal domain.

This sequence belongs to the cyclin family. Cyclin C subfamily. As to quaternary structure, component of the Cdk8 module of the Mediator complex.

The protein resides in the nucleus. Its function is as follows. Component of the Mediator complex, a coactivator involved in regulated gene transcription of nearly all RNA polymerase II-dependent genes. Mediator functions as a bridge to convey information from gene-specific regulatory proteins to the basal RNA polymerase II transcription machinery. Mediator is recruited to promoters by direct interactions with regulatory proteins and serves as a scaffold for the assembly of a functional preinitiation complex with RNA polymerase II and the general transcription factors. Binds to and activates cyclin-dependent kinase Cdk8 that phosphorylates the CTD (C-terminal domain) of the large subunit of RNA polymerase II (RNAp II), which may inhibit the formation of a transcription initiation complex. In Anopheles gambiae (African malaria mosquito), this protein is Cyclin-C (CycC).